Consider the following 239-residue polypeptide: Zinc finger protein 575 (239 aa).

The tract at residues 1-62 is disordered; it reads MLGGSVKSEV…PQRPHRCPDC (62 aa). The segment covering 22 to 31 has biased composition (basic and acidic residues); the sequence is PETKAPHQDL. The segment covering 46-57 has biased composition (basic residues); the sequence is RPRRRPPPQRPH. 6 consecutive C2H2-type zinc fingers follow at residues 57 to 79, 85 to 107, 113 to 135, 141 to 163, 171 to 193, and 207 to 230; these read HRCPDCPKAFSYPSKLATHRLAH, HPCPDCPKAFSYPSKLAAHRLTH, HSCPHCPKAFGHRSKLAAHLWTH, YPCPDCPKSFCYPSKLAAHRHTH, YPCPHCPKAFSFPSKLAAHRLCH, and HRCSSCNQAFGQRRLLLVHQRSHH.

Belongs to the krueppel C2H2-type zinc-finger protein family.

Its subcellular location is the nucleus. May be involved in transcriptional regulation. In Mus musculus (Mouse), this protein is Zinc finger protein 575 (Znf575).